Reading from the N-terminus, the 429-residue chain is Na(+)/H(+) antiporter NhaA 1 (429 aa).

Transmembrane regions (helical) follow at residues 32–52 (ISGG…NSPW), 73–93 (LSVQ…VAGL), 111–131 (VVPV…YSLL), 140–160 (GWAI…AVVG), 170–190 (FLLT…AVAY), 193–213 (ELSV…TLLV), 219–239 (AWWL…ASGV), 243–263 (VAGV…AGGP), 284–304 (VAVP…LGGL), 316–336 (VVVG…WLVA), 349–369 (WVDV…SLLI), and 383–403 (HVKV…TVVL).

The protein belongs to the NhaA Na(+)/H(+) (TC 2.A.33) antiporter family.

It is found in the cell membrane. The enzyme catalyses Na(+)(in) + 2 H(+)(out) = Na(+)(out) + 2 H(+)(in). Functionally, na(+)/H(+) antiporter that extrudes sodium in exchange for external protons. This Frankia alni (strain DSM 45986 / CECT 9034 / ACN14a) protein is Na(+)/H(+) antiporter NhaA 1.